The sequence spans 258 residues: UPF0246 protein YaaA (258 aa).

The protein belongs to the UPF0246 family.

This is UPF0246 protein YaaA from Shigella dysenteriae serotype 1 (strain Sd197).